We begin with the raw amino-acid sequence, 2098 residues long: MTLPNNVILFGDQTVDPCPIIKQLYRQSRDFLTLEALFRQSYDAVRREIATLEYSDRALFPAFNSIQGLAERQAERHNEAVSTVLHCIAQLGLLLIYADQDDSLFNASPSRTYLVGLCTGMLPAAALAASSSTSQLLRLAPDVVLVALRLGLEANRRSAQIEASTESWASVVPGMAPQEQQAALAQFNDEFMIPTSKQAYISAESDSTATISGPPSTLVSLFSSSDSFRKARRIKLPITAAFHAPHLRLPDVEKIIGSLSHSDEYPLRNDVVIVSTRSGKPITAQSLGDALQHIILDILQEPMRWSSVVDEMINNLKDQRTILTSAGPVRAADSLRQRLASAGIEVLKSTEMQPQGEQPTKPRSSDIAIIGFAARLPESETLEEAWKLLEDGRDIPSDRFDVNTHCDPSGKIKNTSHTPYGCFLDRPGFFDARLFNMSPREASQTDPAQRLLLLTTYEALEMAGYTPDGTPSTAGDRIGTFFGQTLDDYREANASQNIEMYYVSGGIRAFGPGRLNFHFKWEGPSYCVDAACSSSTLSIQMAMSSLRAHECDTAVAGGTNVLTGVDMFSGLSRGSFLSPTGSCKTFDNDADGYCRGDGVGSVILKRLDDAIADGDNIQAVIKSAATNHSAHAVSITHPHAGAQQNLMRQVLRDADVEPSDIDYVEMHGTGTQAGDATEFASVTNVISGRTRDNPLHVGAVKANIGHAEAAAGTNSLVKVLMMMRKNAIPPHVGIKGRINESFPPLDKINVRINRTMTPFVARAGGDGKRRVLLNNFNATGGNTSLLLEDAPKTEIRGHDPRSAHVIAISAKTSYSFRQNTQRLLEYLQQNPETQLQDLAYTTTARRMHHAIRKAYAVQSTEQLVQSLKKDISNSPEIGATTEHTSAIFLFTGQGSQYLGMGRQLFQTNTSFRKSISDSDSICTRQGLPSFEWIVSAEPSDDRVPTPSETQLALVAIALALAALWQSWGITPKAVIGHSLGEYAALCVAGVLSVSDTLYLVGKRAEMMEKKCVANTHAMLAIQSDSESIQQLISGGQMPSCEIACFNGPSNTVVSGSLKDIHSLEVKLSAMGTKTTLLKLPFAFHSVQMDPILEDIRALAQNVQFRKPIVPIASTLLGTLVKDHGIITADYLARQARQAVKFQEALQACKAENIASEDTLWIEVGPHPLCHGMVRSTLGLSPTKALPTLKRDEDCWSTISRSIANAYNSGVKVSWIDYHRDFQGALKLLELPSYAFDLKNYWIQHEGDWSLRKGETTRTTAPPPQASFSTTCLQGVENETFTQDSASVTFSSQLSEPKLNAAVRGHLVSGIGLCPSSVYADVAFTAAWYIASRMTPSDPVPAMDLSTMEVFRPLVVNSNETSQLLKVSASRNSNEQVVNIKISSQDSKGRQEHAHCTVMYGDGQQWMDEWQRNAYLFESRIAKLTQPSSPGIHRMLKEMIYKQFQTVVTYSPEYHNIDEIFMDCDLNETAANIKLQSMAGSGEFIYSPYWIDTIAHLAGFILNANVKTPTDTVFISHGWQSFRIAAPLSAEKAYRGYVRMQPSNGRGVMAGDVYIFDGEDIVVVCKGIKFQQMKRTTLQSLLGVSTAATSISKPVAAKETRPHPVVVRKAAVTQSPSAGFSKVLDTIASEVGVDVSELSDDVKISDVGVDSLLTISILGRLRPETGLDLSSSLFIEHPTIAELRAFFLDKMDEPQATANDDDSDDSSEDEDPGYSRSQSNSTISTPEEPDVVSILMSIVAREVGVEESEIQLSTPFAEIGVDSLLTISILDAFKTEIGVNLSANFFHDHPTFADVQKALGPTSTPQKSLDLPLRSLEQSSKASSQTLRAKSVLLQGRPEKGKPALFLLPDGAGSLFSYISMPSLPSGLPVYGLDSPFHNDPSEYTISFSAVAAIYIAAIRAIQPKGPYMLGGWSLGGIHAYETARQLIEQGETISNLIMIDSPCPGTLPPLPAPTLSLLEKAGIFDGLSTSGAPITERTRLHFLGCVRALENYTAVPLPVGKSPGKVTVIWAQEGVLEGREEQGKEYMAATSSGDLNKDMDKAKEWLTGRRTSFGPSGWDKLTGTEVHCHVVSGNHFSIMFPPKIAAVAKAVATGLPEK.

The 236-residue stretch at 8-243 (ILFGDQTVDP…IKLPITAAFH (236 aa)) folds into the Starter acyltransferase (SAT) domain. A Ketosynthase family 3 (KS3) domain is found at 364–789 (SSDIAIIGFA…GGNTSLLLED (426 aa)). Catalysis depends on for beta-ketoacyl synthase activity residues cysteine 532, histidine 667, and histidine 706. The Malonyl-CoA:ACP transacylase (MAT) domain maps to 887-1211 (IFLFTGQGSQ…IANAYNSGVK (325 aa)). The N-terminal hotdog fold stretch occupies residues 1270–1404 (TCLQGVENET…CTVMYGDGQQ (135 aa)). In terms of domain architecture, PKS/mFAS DH spans 1270–1578 (TCLQGVENET…FQQMKRTTLQ (309 aa)). Histidine 1305 (proton acceptor; for dehydratase activity) is an active-site residue. The segment at 1431 to 1578 (IHRMLKEMIY…FQQMKRTTLQ (148 aa)) is C-terminal hotdog fold. The Proton donor; for dehydratase activity role is filled by aspartate 1491. Positions 1613 to 1690 (QSPSAGFSKV…ELRAFFLDKM (78 aa)) constitute a Carrier 1 domain. An O-(pantetheine 4'-phosphoryl)serine modification is found at serine 1650. Residues 1693–1725 (PQATANDDDSDDSSEDEDPGYSRSQSNSTISTP) are disordered. Over residues 1698–1711 (NDDDSDDSSEDEDP) the composition is skewed to acidic residues. Over residues 1714-1724 (SRSQSNSTIST) the composition is skewed to polar residues. One can recognise a Carrier 2 domain in the interval 1725–1802 (PEEPDVVSIL…DVQKALGPTS (78 aa)). Serine 1762 is modified (O-(pantetheine 4'-phosphoryl)serine). Residues 1844–2080 (LFLLPDGAGS…VSGNHFSIMF (237 aa)) are thioesterase (TE) domain.

Pantetheine 4'-phosphate is required as a cofactor.

It functions in the pathway secondary metabolite biosynthesis. In terms of biological role, non-reducing polyketide synthase; part of the gene cluster that mediates the biosynthesis of the red pigment cristazarin, a naphthazarin derivative. The polyketide product of crz7 is likely 2-acetyl-1,3,6,8-tetrahydoxynaphthalene (AT4HN) from which a probable biosynthetic route of cristazarin can be deduced. The presence of two O-methyltransferases (crz1 and crz2), an enoyl reductase (crz5), an oxidase (crz8), and a short-chain dehydrogenase (crz9) encoded in the cristazarin biosynthetic cluster is consistent with methylation of a hydroxyl group, addition of two hydroxyl groups to the naphthalene core ring, and reduction of the acetyl side chain. The polypeptide is Non-reducing polyketide synthase crz7 (Cladonia metacorallifera (Lichen-forming fungus)).